We begin with the raw amino-acid sequence, 454 residues long: F-box protein At1g67130 (454 aa).

The F-box domain occupies 4 to 53 (GETLDSIPTDLILDILSRLPTKSIARFHCVSKLWSSMLASQDFTRLFVNR).

This chain is F-box protein At1g67130, found in Arabidopsis thaliana (Mouse-ear cress).